The sequence spans 97 residues: Large ribosomal subunit protein bL28 (97 aa).

Belongs to the bacterial ribosomal protein bL28 family.

The polypeptide is Large ribosomal subunit protein bL28 (Rickettsia rickettsii (strain Iowa)).